A 368-amino-acid polypeptide reads, in one-letter code: Zinc finger protein 24 (368 aa).

A Glycyl lysine isopeptide (Lys-Gly) (interchain with G-Cter in SUMO2) cross-link involves residue lysine 22. Lysine 27 participates in a covalent cross-link: Glycyl lysine isopeptide (Lys-Gly) (interchain with G-Cter in SUMO1); alternate. Lysine 27 participates in a covalent cross-link: Glycyl lysine isopeptide (Lys-Gly) (interchain with G-Cter in SUMO2); alternate. The SCAN box domain occupies 52 to 134 (RQRFRQFGYQ…AVLEDLESEL (83 aa)). Phosphoserine occurs at positions 132 and 142. Residues lysine 147, lysine 177, and lysine 236 each participate in a glycyl lysine isopeptide (Lys-Gly) (interchain with G-Cter in SUMO2) cross-link. Residues 251 to 273 (HICDECGKHFSQGSALILHQRIH) form a C2H2-type 1 zinc finger. Residues 251–301 (HICDECGKHFSQGSALILHQRIHSGEKPYGCVECGKAFSRSSILVQHQRVH) form a necessary and sufficient for nuclear localization region. At serine 274 the chain carries Phosphoserine. Residues lysine 277 and lysine 286 each participate in a glycyl lysine isopeptide (Lys-Gly) (interchain with G-Cter in SUMO2) cross-link. 3 consecutive C2H2-type zinc fingers follow at residues 279-301 (YGCV…QRVH), 307-329 (YKCL…QRIH), and 335-357 (YECV…QRRH). A Phosphoserine modification is found at serine 292. At tyrosine 335 the chain carries Phosphotyrosine. Glycyl lysine isopeptide (Lys-Gly) (interchain with G-Cter in SUMO2) cross-links involve residues lysine 361 and lysine 367.

The protein belongs to the krueppel C2H2-type zinc-finger protein family. In terms of processing, sumoylated. In terms of tissue distribution, widely expressed with highest levels in heart, brain, liver, skeletal muscle, kidney and testis and very low levels in spleen and lung.

It localises to the nucleus. In terms of biological role, transcription factor required for myelination of differentiated oligodendrocytes. Required for the conversion of oligodendrocytes from the premyelinating to the myelinating state. In the developing central nervous system (CNS), involved in the maintenance in the progenitor stage by promoting the cell cycle. Specifically binds to the 5'-TCAT-3' DNA sequence. Has transcription repressor activity in vitro. This chain is Zinc finger protein 24, found in Mus musculus (Mouse).